Reading from the N-terminus, the 512-residue chain is Anaerobic nitric oxide reductase transcription regulator NorR (512 aa).

One can recognise a Sigma-54 factor interaction domain in the interval methionine 190 to valine 419. ATP-binding positions include glycine 218 to glutamate 225 and alanine 281 to glutamate 290. Positions tryptophan 487–lysine 506 form a DNA-binding region, H-T-H motif.

It participates in nitrogen metabolism; nitric oxide reduction. Required for the expression of anaerobic nitric oxide (NO) reductase, acts as a transcriptional activator for at least the norVW operon. Activation also requires sigma-54. The chain is Anaerobic nitric oxide reductase transcription regulator NorR from Aliivibrio fischeri (strain ATCC 700601 / ES114) (Vibrio fischeri).